A 174-amino-acid chain; its full sequence is Methylated-DNA--protein-cysteine methyltransferase (174 aa).

Cys141 serves as the catalytic Nucleophile; methyl group acceptor.

It belongs to the MGMT family.

It is found in the cytoplasm. The catalysed reaction is a 6-O-methyl-2'-deoxyguanosine in DNA + L-cysteinyl-[protein] = S-methyl-L-cysteinyl-[protein] + a 2'-deoxyguanosine in DNA. It catalyses the reaction a 4-O-methyl-thymidine in DNA + L-cysteinyl-[protein] = a thymidine in DNA + S-methyl-L-cysteinyl-[protein]. Its function is as follows. Involved in the cellular defense against the biological effects of O6-methylguanine (O6-MeG) and O4-methylthymine (O4-MeT) in DNA. Repairs the methylated nucleobase in DNA by stoichiometrically transferring the methyl group to a cysteine residue in the enzyme. This is a suicide reaction: the enzyme is irreversibly inactivated. This chain is Methylated-DNA--protein-cysteine methyltransferase, found in Thermococcus gammatolerans (strain DSM 15229 / JCM 11827 / EJ3).